The following is a 360-amino-acid chain: Peptide chain release factor 1 (360 aa).

Gln-235 carries the N5-methylglutamine modification. Residues Gln-284–Thr-293 are compositionally biased toward basic and acidic residues. The segment at Gln-284–Asp-305 is disordered.

This sequence belongs to the prokaryotic/mitochondrial release factor family. Post-translationally, methylated by PrmC. Methylation increases the termination efficiency of RF1.

Its subcellular location is the cytoplasm. Functionally, peptide chain release factor 1 directs the termination of translation in response to the peptide chain termination codons UAG and UAA. The polypeptide is Peptide chain release factor 1 (Pectobacterium carotovorum subsp. carotovorum (strain PC1)).